Consider the following 327-residue polypeptide: Probable cell division protein WhiA (327 aa).

Residues 275-308 (SLEELGQLADPPMTKDAVAGRIRRLLSMADRRAR) constitute a DNA-binding region (H-T-H motif).

Belongs to the WhiA family.

Its function is as follows. Involved in cell division and chromosome segregation. This Nocardia farcinica (strain IFM 10152) protein is Probable cell division protein WhiA.